The following is a 430-amino-acid chain: Putative aspergillopepsin A-like aspartic endopeptidase MCYG_07979 (430 aa).

The signal sequence occupies residues 1–17 (MHLSSLLVAVLLPLALS). Positions 18 to 87 (KPTPRKKPGS…SKIAGGAPGA (70 aa)) are cleaved as a propeptide — activation peptide. The tract at residues 59–105 (STQGMDGYRPEPISRFQGNSKIAGGAPGAKDDGKDEKGEVENNPTSH) is disordered. Over residues 87–98 (AKDDGKDEKGEV) the composition is skewed to basic and acidic residues. The Peptidase A1 domain occupies 109-427 (FLSPVTIGGQ…DYRGPSVSLA (319 aa)). The active site involves D125. The N-linked (GlcNAc...) asparagine glycan is linked to N306. D314 is an active-site residue. N352 is a glycosylation site (N-linked (GlcNAc...) asparagine).

This sequence belongs to the peptidase A1 family.

Its subcellular location is the secreted. This chain is Putative aspergillopepsin A-like aspartic endopeptidase MCYG_07979, found in Arthroderma otae (strain ATCC MYA-4605 / CBS 113480) (Microsporum canis).